A 392-amino-acid chain; its full sequence is Type III polyketide synthase B (392 aa).

57 to 64 (KLTRLCKT) provides a ligand contact to CoA. Cys166 (nucleophile) is an active-site residue. Residue 218 to 219 (GD) participates in substrate binding. CoA-binding positions include Leu269, 309–312 (GGPA), and Ala312.

The protein belongs to the thiolase-like superfamily. Chalcone/stilbene synthases family. As to quaternary structure, homodimer. Interacts with 4CLL1/ACOS5 and TKPR1. As to expression, expressed in flowers and flower buds (at protein level). Mostly confined to anther tapetal cells.

Its subcellular location is the endoplasmic reticulum. It participates in secondary metabolite biosynthesis; flavonoid biosynthesis. Functionally, plant type III polyketide synthases (PKSs) that catalyzes the condensation of malonyl-CoA units with various CoA ester starter molecules to generate a diverse array of natural products including long-chain alkyl alpha-pyrones. Accepts up to C(20) chain-length fatty acyl CoAs as starter substrates, and carries out sequential condensations with malonyl-CoA to produce triketide and tetraketide alpha-pyrones, potential sporopollenin precursors. Favorite substrates for are midchain- and v-hydroxylated fatty acyl-CoAs (e.g. 12-hydroxyoctadecanoyl-CoA and 16-hydroxyhexadecanoyl-CoA). Required for pollen development and sporopollenin biosynthesis, the major constituent of exine in the outer pollen wall. In vitro, can use 4-coumaroyl-coenzyme A as substrate to produce bis-noryangonin and fatty acyl-coenzyme A as substrate to produce medium-chain alkyl pyrones. May play a role in both the synthesis of pollen fatty acids and phenolics found in exine. The polypeptide is Type III polyketide synthase B (Arabidopsis thaliana (Mouse-ear cress)).